A 200-amino-acid chain; its full sequence is NADH-quinone oxidoreductase subunit C (200 aa).

This sequence belongs to the complex I 30 kDa subunit family. In terms of assembly, NDH-1 is composed of 14 different subunits. Subunits NuoB, C, D, E, F, and G constitute the peripheral sector of the complex.

Its subcellular location is the cell inner membrane. The enzyme catalyses a quinone + NADH + 5 H(+)(in) = a quinol + NAD(+) + 4 H(+)(out). Its function is as follows. NDH-1 shuttles electrons from NADH, via FMN and iron-sulfur (Fe-S) centers, to quinones in the respiratory chain. The immediate electron acceptor for the enzyme in this species is believed to be ubiquinone. Couples the redox reaction to proton translocation (for every two electrons transferred, four hydrogen ions are translocated across the cytoplasmic membrane), and thus conserves the redox energy in a proton gradient. This Paraburkholderia xenovorans (strain LB400) protein is NADH-quinone oxidoreductase subunit C.